We begin with the raw amino-acid sequence, 225 residues long: Thymidylate kinase (225 aa).

Residue 15 to 22 (GGEGSGKS) participates in ATP binding.

It belongs to the thymidylate kinase family.

The catalysed reaction is dTMP + ATP = dTDP + ADP. Its function is as follows. Phosphorylation of dTMP to form dTDP in both de novo and salvage pathways of dTTP synthesis. The chain is Thymidylate kinase from Protochlamydia amoebophila (strain UWE25).